A 335-amino-acid chain; its full sequence is Glycerol-3-phosphate dehydrogenase [NAD(P)+] (335 aa).

NADPH is bound by residues serine 12, tryptophan 13, histidine 33, arginine 34, and lysine 108. Residues lysine 108, glycine 137, and threonine 139 each coordinate sn-glycerol 3-phosphate. Alanine 141 lines the NADPH pocket. Sn-glycerol 3-phosphate contacts are provided by lysine 192, aspartate 245, serine 255, arginine 256, and asparagine 257. The active-site Proton acceptor is lysine 192. Arginine 256 is an NADPH binding site. NADPH is bound at residue glutamate 282.

It belongs to the NAD-dependent glycerol-3-phosphate dehydrogenase family.

It is found in the cytoplasm. It catalyses the reaction sn-glycerol 3-phosphate + NAD(+) = dihydroxyacetone phosphate + NADH + H(+). The enzyme catalyses sn-glycerol 3-phosphate + NADP(+) = dihydroxyacetone phosphate + NADPH + H(+). It functions in the pathway membrane lipid metabolism; glycerophospholipid metabolism. In terms of biological role, catalyzes the reduction of the glycolytic intermediate dihydroxyacetone phosphate (DHAP) to sn-glycerol 3-phosphate (G3P), the key precursor for phospholipid synthesis. In Methylococcus capsulatus (strain ATCC 33009 / NCIMB 11132 / Bath), this protein is Glycerol-3-phosphate dehydrogenase [NAD(P)+].